Reading from the N-terminus, the 236-residue chain is MHTTQKDTTYTKIFVGGLPYHTTDASLRKYFEVFGEIEEAVVITDRQTGKSRGYGFVTMADRAAAERACKDPNPIIDGRKANVNLAYLGAKPRIMQPGFAFGVQQLHPALIQRPFGIPAHYVYPQAFVQPGVVIPHVQPTAAAASTTPYIDYTGAAYAQYSAAAAAAAAAAAYDQYPYAASPAAAGYVTAGGYGYAVQQPITAAAPGTAAAAAAAAAAAAAFGQYQPQQLQTDRMQ.

The region spanning 11–88 (TKIFVGGLPY…RKANVNLAYL (78 aa)) is the RRM domain. The tract at residues 175–199 (QYPYAASPAAAGYVTAGGYGYAVQQ) is necessary for interaction with EIF4E.

In terms of assembly, interacts with EIF4E; this interaction prevents EIF4E from binding to p53/TP53 mRNA and inhibits the assembly of translation initiation complex. (Microbial infection) Interacts with HCV mature core protein; this interaction, which enhances the interaction of Core with 5'-UTR may favor viral replication over translation. As to quaternary structure, (Microbial infection) Interacts with HCV Serine protease/helicase NS3. In terms of tissue distribution, expressed in fetal and adult heart and skeletal muscles.

It is found in the nucleus. The protein localises to the cytoplasm. Multifunctional RNA-binding protein involved in the regulation of pre-mRNA splicing, mRNA stability and mRNA translation important for cell fate decision and differentiation. Plays a major role in pre-mRNA alternative splicing regulation. Mediates preferentially muscle-specific exon inclusion in numerous mRNAs important for striated cardiac and skeletal muscle cell differentiation. Binds to intronic splicing enhancer (ISE) composed of stretches of GU-rich motifs localized in flanking intron of exon that will be included by alternative splicing. Involved in embryonic stem cell (ESC) transition to cardiac cell differentiation by promoting pre-mRNA alternative splicing events of several pluripotency and/or differentiation genes. Plays a role in the regulation of mRNA stability. Binds to 3'-untranslated region (UTR) AU-rich elements in target transcripts, such as CDKN1A and MYOG, leading to maintain their stabilities. Involved in myogenic differentiation by regulating MYOG levels. Binds to multiple regions in the mRNA 3'-UTR of TP63 isoform 2, hence inducing its destabilization. Also promotes the destabilization of the CHRM2 mRNA via its binding to a region in the coding sequence. Plays a role in the regulation of mRNA translation. Mediates repression of p53/TP53 mRNA translation through its binding to U-rich element in the 3'-UTR, hence preventing EIF4E from binding to p53/TP53 mRNA and translation initiation. Binds to a huge amount of mRNAs. Required for embryonic heart development, sarcomer and M-band formation in striated muscles. Together with RBM20, promotes the expression of short isoforms of PDLIM5/ENH in cardiomyocytes. Functionally, (Microbial infection) Promotes hepatitis C virus (HCV) replication over translation through the inhibition of viral protein expression. Decreases viral translation by linking viral 5'- and 3'-UTRs, blocking 80S ribosome assembly on the viral IRES and enhancing the interaction of the mature core protein and 5'-UTR. This chain is RNA-binding protein 24, found in Homo sapiens (Human).